The following is a 1109-amino-acid chain: Protein phosphatase 1 regulatory subunit 3A (1109 aa).

Residues S40 and S44 each carry the phosphoserine; by GSK3 modification. Residue S48 is modified to Phosphoserine; by PKA and ISPK. The residue at position 51 (S51) is a Phosphoserine. At T58 the chain carries Phosphothreonine. The short motif at 64–67 (RRVS) is the PP1-binding motif element. S67 is subject to Phosphoserine; by PKA. The region spanning 124–232 (QLQVQKAMLE…NNNGTNYTLV (109 aa)) is the CBM21 domain. Over residues 236-251 (KEPEPEPGKPLEEAPS) the composition is skewed to basic and acidic residues. 4 disordered regions span residues 236–278 (KEPE…NFEN), 340–424 (GKNT…SDGS), 436–455 (DDNA…CSFP), and 493–517 (YFKK…KEKR). Composition is skewed to polar residues over residues 340-352 (GKNT…SNIP), 360-384 (KNQS…SAES), and 396-406 (YSSGNESSHQP). The residue at position 843 (S843) is a Phosphoserine. 2 disordered regions span residues 945-985 (SATE…RKEK) and 1011-1048 (SREN…ETQD). Over residues 951-963 (YNCSPTRETQGQP) the composition is skewed to polar residues. Basic and acidic residues-rich tracts occupy residues 966–985 (KPEE…RKEK) and 1011–1034 (SREN…KEFE). Residues 1035-1048 (SSASSSLPVQETQD) are compositionally biased toward polar residues. A helical transmembrane segment spans residues 1066–1086 (FLLFLMFLVTVYHYDLMIGLA).

As to quaternary structure, interacts with PPP1CC catalytic subunit of PP1, and associates with glycogen. Phosphorylation at Ser-48 by ISPK stimulates the dephosphorylation of glycogen synthase and phosphorylase kinase. Skeletal muscle, diaphragm and cardiac muscle.

It is found in the membrane. Seems to act as a glycogen-targeting subunit for PP1. PP1 is essential for cell division, and participates in the regulation of glycogen metabolism, muscle contractility and protein synthesis. Plays an important role in glycogen synthesis but is not essential for insulin activation of glycogen synthase. In Oryctolagus cuniculus (Rabbit), this protein is Protein phosphatase 1 regulatory subunit 3A (PPP1R3A).